A 477-amino-acid chain; its full sequence is Pentatricopeptide repeat-containing protein At4g14170 (477 aa).

PPR repeat units follow at residues 65-96, 97-131, 133-167, 168-198, 199-233, 234-264, 269-299, 300-334, 335-369, and 370-400; these read NVVLSSKLVLAYSKLNHLFPTSLSVFWHMPYR, NIFSWNIIIGEFSRSGFASKSIDLFLRMWRESCVR, DDFTLPLILRACSASREAKSGDLIHVLCLKLGFSS, SLFVSSALVIMYVDMGKLLHARKLFDDMPVR, DSVLYTAMFGGYVQQGEAMLGLAMFREMGYSGFAL, DSVVMVSLLMACGQLGALKHGKSVHGWCIRR, GLNLGNAITDMYVKCSILDYAHTVFVNMSRR, DVISWSSLILGYGLDGDVVMSFKLFDEMLKEGIEP, NAVTFLGVLSACAHGGLVEKSWLYFRLMQEYNIVP, and ELKHYASVADCMSRAGLLEEAEKFLEDMPVK. A type E motif; degenerate region spans residues 405–477; the sequence is VMGAVLSGCK…ISKVPGCSSI (73 aa).

The protein belongs to the PPR family. PCMP-E subfamily.

In Arabidopsis thaliana (Mouse-ear cress), this protein is Pentatricopeptide repeat-containing protein At4g14170 (PCMP-E17).